A 378-amino-acid chain; its full sequence is Beta sliding clamp (378 aa).

This sequence belongs to the beta sliding clamp family. As to quaternary structure, forms a ring-shaped head-to-tail homodimer around DNA which binds and tethers DNA polymerases and other proteins to the DNA. The DNA replisome complex has a single clamp-loading complex (3 tau and 1 each of delta, delta', psi and chi subunits) which binds 3 Pol III cores (1 core on the leading strand and 2 on the lagging strand) each with a beta sliding clamp dimer. Additional proteins in the replisome are other copies of gamma, psi and chi, Ssb, DNA helicase and RNA primase.

It is found in the cytoplasm. Functionally, confers DNA tethering and processivity to DNA polymerases and other proteins. Acts as a clamp, forming a ring around DNA (a reaction catalyzed by the clamp-loading complex) which diffuses in an ATP-independent manner freely and bidirectionally along dsDNA. Initially characterized for its ability to contact the catalytic subunit of DNA polymerase III (Pol III), a complex, multichain enzyme responsible for most of the replicative synthesis in bacteria; Pol III exhibits 3'-5' exonuclease proofreading activity. The beta chain is required for initiation of replication as well as for processivity of DNA replication. This Streptococcus pneumoniae serotype 4 (strain ATCC BAA-334 / TIGR4) protein is Beta sliding clamp (dnaN).